The chain runs to 553 residues: Zinc finger protein with KRAB and SCAN domains 3 (553 aa).

The segment at glutamate 28–arginine 49 is disordered. Phosphoserine is present on residues serine 33 and serine 44. Residues arginine 51–leucine 133 enclose the SCAN box domain. Residue threonine 136 is modified to Phosphothreonine. Lysine 176 participates in a covalent cross-link: Glycyl lysine isopeptide (Lys-Gly) (interchain with G-Cter in SUMO2). Threonine 206 is subject to Phosphothreonine. One can recognise a KRAB domain in the interval leucine 213 to proline 273. Serine 223 is modified (phosphoserine). 5 C2H2-type zinc fingers span residues phenylalanine 313–histidine 335, tyrosine 341–histidine 363, tyrosine 369–histidine 391, tyrosine 397–histidine 419, and tyrosine 425–histidine 447. Phosphothreonine is present on threonine 448. 2 consecutive C2H2-type zinc fingers follow at residues tyrosine 479 to histidine 501 and phenylalanine 507 to histidine 529.

The protein belongs to the krueppel C2H2-type zinc-finger protein family. Expressed in heart, brain, spleen, lung, liver, skeletal muscle, kidney and testis.

It localises to the nucleus. It is found in the cytoplasm. Functionally, transcriptional factor that binds to the consensus sequence 5'-[GT][AG][AGT]GGGG-3' and acts as a repressor of autophagy. Specifically represses expression of genes involved in autophagy and lysosome biogenesis/function such as MAP1LC3B, ULK1 or WIPI2. Associates with chromatin at the ITGB4 and VEGF promoters. The protein is Zinc finger protein with KRAB and SCAN domains 3 (Zkscan3) of Mus musculus (Mouse).